We begin with the raw amino-acid sequence, 240 residues long: MADKKAPASGWPIVSGEYVVGNPESCVAVVTLGSHGLDEAAIEAGAAISGPCHTENLGIEKVVANYISNPNIRFMLVTGSEVQGHITGQCFKALYENGIGDDGGIIGAKGAIPFLENAGQDAISRFQNQLVEIVDLIDVEDTGKISSAIKDCISKDPGAFEEDPMILDLEGGGGEAGADESTSIKPAAPETVLLEARMRMISEKINDAALIAKFNSGYYNGKIQGIAIGLFLSLLIFSLL.

The Cytoplasmic portion of the chain corresponds to 1-216 (MADKKAPASG…DAALIAKFNS (216 aa)). Residue H85 coordinates 5-hydroxybenzimidazolylcob(I)amide. The helical transmembrane segment at 217–234 (GYYNGKIQGIAIGLFLSL) threads the bilayer. At 235–240 (LIFSLL) the chain is on the extracellular side.

It belongs to the MtrA family. As to quaternary structure, the complex is composed of 8 subunits; MtrA, MtrB, MtrC, MtrD, MtrE, MtrF, MtrG and MtrH. 5-hydroxybenzimidazolylcob(I)amide is required as a cofactor.

It is found in the cell membrane. The enzyme catalyses 5-methyl-5,6,7,8-tetrahydromethanopterin + coenzyme M + 2 Na(+)(in) = 5,6,7,8-tetrahydromethanopterin + methyl-coenzyme M + 2 Na(+)(out). The protein operates within one-carbon metabolism; methanogenesis from CO(2); methyl-coenzyme M from 5,10-methylene-5,6,7,8-tetrahydromethanopterin: step 2/2. In terms of biological role, part of a complex that catalyzes the formation of methyl-coenzyme M and tetrahydromethanopterin from coenzyme M and methyl-tetrahydromethanopterin. This is an energy-conserving, sodium-ion translocating step. The sequence is that of Tetrahydromethanopterin S-methyltransferase subunit A from Methanococcus aeolicus (strain ATCC BAA-1280 / DSM 17508 / OCM 812 / Nankai-3).